A 364-amino-acid polypeptide reads, in one-letter code: Chorismate synthase (364 aa).

Arginine 48 serves as a coordination point for NADP(+). Residues 131–133, 243–244, glycine 288, 303–307, and arginine 329 each bind FMN; these read RSS, NA, and KPTSS.

It belongs to the chorismate synthase family. Homotetramer. FMNH2 serves as cofactor.

The catalysed reaction is 5-O-(1-carboxyvinyl)-3-phosphoshikimate = chorismate + phosphate. Its pathway is metabolic intermediate biosynthesis; chorismate biosynthesis; chorismate from D-erythrose 4-phosphate and phosphoenolpyruvate: step 7/7. Its function is as follows. Catalyzes the anti-1,4-elimination of the C-3 phosphate and the C-6 proR hydrogen from 5-enolpyruvylshikimate-3-phosphate (EPSP) to yield chorismate, which is the branch point compound that serves as the starting substrate for the three terminal pathways of aromatic amino acid biosynthesis. This reaction introduces a second double bond into the aromatic ring system. The chain is Chorismate synthase from Brucella melitensis biotype 2 (strain ATCC 23457).